A 240-amino-acid chain; its full sequence is MAENVLSAQKRTEQGKGPARRLRQQGLIPAVVYGGKREPTHVALDPATLLKAIETPHKFNTLLELQVDGASKHVLFKDYTVDPVTRKLLHADFLEVSMDQPVKVNVPVVTVGRAAGVAEGGILSVATHAIVVEALPNKIPVRIEVDVTELKIGRSLHVSELKAPEGCKFKFQTDYVVVFVAVPEKEEVAAPVAAAVPGAAPAEGAAPAAGAAAPAGGAAPAAGAAPAKGGEAKGGDKAKK.

Disordered stretches follow at residues 1 to 21 (MAEN…PARR) and 204 to 240 (GAAP…KAKK). A compositionally biased stretch (low complexity) spans 204 to 229 (GAAPAAGAAAPAGGAAPAAGAAPAKG). Residues 230–240 (GEAKGGDKAKK) are compositionally biased toward basic and acidic residues.

The protein belongs to the bacterial ribosomal protein bL25 family. CTC subfamily. As to quaternary structure, part of the 50S ribosomal subunit; part of the 5S rRNA/L5/L18/L25 subcomplex. Contacts the 5S rRNA. Binds to the 5S rRNA independently of L5 and L18.

Its function is as follows. This is one of the proteins that binds to the 5S RNA in the ribosome where it forms part of the central protuberance. In Anaeromyxobacter dehalogenans (strain 2CP-1 / ATCC BAA-258), this protein is Large ribosomal subunit protein bL25.